We begin with the raw amino-acid sequence, 474 residues long: L-arabinose isomerase (474 aa).

Residues Glu306, Glu331, His348, and His447 each contribute to the Mn(2+) site.

It belongs to the arabinose isomerase family. The cofactor is Mn(2+).

It carries out the reaction beta-L-arabinopyranose = L-ribulose. It participates in carbohydrate degradation; L-arabinose degradation via L-ribulose; D-xylulose 5-phosphate from L-arabinose (bacterial route): step 1/3. Its function is as follows. Catalyzes the conversion of L-arabinose to L-ribulose. This chain is L-arabinose isomerase, found in Levilactobacillus brevis (strain ATCC 367 / BCRC 12310 / CIP 105137 / JCM 1170 / LMG 11437 / NCIMB 947 / NCTC 947) (Lactobacillus brevis).